A 504-amino-acid polypeptide reads, in one-letter code: DNA-binding protein reb1 (504 aa).

A disordered region spans residues 30–51 (DFDDFPLNKGLKTNNNDYSGSI). HTH myb-type domains are found at residues 308 to 361 (NPFE…RFGD) and 362 to 422 (KLKR…KAAS). 2 consecutive DNA-binding regions (H-T-H motif) follow at residues 335-357 (WTKI…RDVV) and 395-418 (WTLV…QQLT).

It localises to the nucleus. Functionally, DNA-binding protein that recognizes sites within both the enhancer and the promoter of rRNA transcription, as well as upstream of many genes transcribed by RNA polymerase II. Has a role in the termination of RNA polymerase I catalyzed transcription. The polypeptide is DNA-binding protein reb1 (reb1) (Schizosaccharomyces pombe (strain 972 / ATCC 24843) (Fission yeast)).